Consider the following 147-residue polypeptide: Large ribosomal subunit protein uL13 (147 aa).

This sequence belongs to the universal ribosomal protein uL13 family. Part of the 50S ribosomal subunit.

In terms of biological role, this protein is one of the early assembly proteins of the 50S ribosomal subunit, although it is not seen to bind rRNA by itself. It is important during the early stages of 50S assembly. The chain is Large ribosomal subunit protein uL13 from Lactobacillus delbrueckii subsp. bulgaricus (strain ATCC 11842 / DSM 20081 / BCRC 10696 / JCM 1002 / NBRC 13953 / NCIMB 11778 / NCTC 12712 / WDCM 00102 / Lb 14).